The primary structure comprises 325 residues: HTH-type transcriptional regulator BbuR (325 aa).

The HTH lysR-type domain occupies 15 to 72 (LDTDLLNVFCWVAKTQSFSRAAAELGTSQPVITRKIGRLEECLGVALFVRSNRGCVLT). The segment at residues 32–51 (FSRAAAELGTSQPVITRKIG) is a DNA-binding region (H-T-H motif).

It belongs to the LysR transcriptional regulatory family.

The polypeptide is HTH-type transcriptional regulator BbuR (bbuR) (Bordetella bronchiseptica (strain ATCC BAA-588 / NCTC 13252 / RB50) (Alcaligenes bronchisepticus)).